The following is a 224-amino-acid chain: Urease accessory protein UreF (224 aa).

The protein belongs to the UreF family. UreD, UreF and UreG form a complex that acts as a GTP-hydrolysis-dependent molecular chaperone, activating the urease apoprotein by helping to assemble the nickel containing metallocenter of UreC. The UreE protein probably delivers the nickel.

The protein resides in the cytoplasm. In terms of biological role, required for maturation of urease via the functional incorporation of the urease nickel metallocenter. The chain is Urease accessory protein UreF from Pseudomonas entomophila (strain L48).